The sequence spans 332 residues: DNA-directed RNA polymerase subunit alpha (332 aa).

The alpha N-terminal domain (alpha-NTD) stretch occupies residues 1 to 244 (MKKHAKVYYS…AHLNLLADVE (244 aa)). Residues 259–332 (IKEEPIRRFS…NYKNENKGEN (74 aa)) are alpha C-terminal domain (alpha-CTD).

This sequence belongs to the RNA polymerase alpha chain family. As to quaternary structure, homodimer. The RNAP catalytic core consists of 2 alpha, 1 beta, 1 beta' and 1 omega subunit. When a sigma factor is associated with the core the holoenzyme is formed, which can initiate transcription.

It carries out the reaction RNA(n) + a ribonucleoside 5'-triphosphate = RNA(n+1) + diphosphate. Functionally, DNA-dependent RNA polymerase catalyzes the transcription of DNA into RNA using the four ribonucleoside triphosphates as substrates. This Mesomycoplasma hyopneumoniae (strain 232) (Mycoplasma hyopneumoniae) protein is DNA-directed RNA polymerase subunit alpha.